A 176-amino-acid chain; its full sequence is dCTP deaminase (176 aa).

DCTP contacts are provided by residues 99 to 104 (RSTLAR) and D115. The Proton donor/acceptor role is filled by E125. Q163 is a dCTP binding site.

Belongs to the dCTP deaminase family. As to quaternary structure, homotrimer.

The enzyme catalyses dCTP + H2O + H(+) = dUTP + NH4(+). It functions in the pathway pyrimidine metabolism; dUMP biosynthesis; dUMP from dCTP (dUTP route): step 1/2. Catalyzes the deamination of dCTP to dUTP. This is dCTP deaminase from Pyrobaculum islandicum (strain DSM 4184 / JCM 9189 / GEO3).